Here is a 207-residue protein sequence, read N- to C-terminus: MIGMLKGRVESVDTSNAVVDVHGVGFELRMPSNDLTAMHMGQDVKIYTSMSVSQDAITLFGFLDARSKRMFLQLQKVSGVGPKVALSLLSTLAPDDLAQAIHDGDDKALSRAPGLGRKGAQKIILELKGSIDVDKIETGEPTSTQRIPTDKGVEQVVEGLMSLGWKQADAQQAVDSVISSSGIALPLEEGNVPTVLRLALTSLDRGR.

The domain I stretch occupies residues 1-63 (MIGMLKGRVE…QDAITLFGFL (63 aa)). The interval 64 to 142 (DARSKRMFLQ…VDKIETGEPT (79 aa)) is domain II. Positions 143–153 (STQRIPTDKGV) are flexible linker. Residues 153–207 (VEQVVEGLMSLGWKQADAQQAVDSVISSSGIALPLEEGNVPTVLRLALTSLDRGR) form a domain III region.

The protein belongs to the RuvA family. Homotetramer. Forms an RuvA(8)-RuvB(12)-Holliday junction (HJ) complex. HJ DNA is sandwiched between 2 RuvA tetramers; dsDNA enters through RuvA and exits via RuvB. An RuvB hexamer assembles on each DNA strand where it exits the tetramer. Each RuvB hexamer is contacted by two RuvA subunits (via domain III) on 2 adjacent RuvB subunits; this complex drives branch migration. In the full resolvosome a probable DNA-RuvA(4)-RuvB(12)-RuvC(2) complex forms which resolves the HJ.

The protein localises to the cytoplasm. The RuvA-RuvB-RuvC complex processes Holliday junction (HJ) DNA during genetic recombination and DNA repair, while the RuvA-RuvB complex plays an important role in the rescue of blocked DNA replication forks via replication fork reversal (RFR). RuvA specifically binds to HJ cruciform DNA, conferring on it an open structure. The RuvB hexamer acts as an ATP-dependent pump, pulling dsDNA into and through the RuvAB complex. HJ branch migration allows RuvC to scan DNA until it finds its consensus sequence, where it cleaves and resolves the cruciform DNA. This Bifidobacterium animalis subsp. lactis (strain AD011) protein is Holliday junction branch migration complex subunit RuvA.